Reading from the N-terminus, the 295-residue chain is MSIATGDFRSKVTSSTLLDKKSKHDPITCLTAYDYSTARLVDEAGIDMILVGDSLAQTMLGYENTLPVTMDEMLHHTRAVRRAVRHAFLIADMPYASYHVGGRESVRNAARFIKEGGAEAVKIEGGENRAALIDRLLDAEVPVVGHIGLTPQSVHRMGGYKVQGKTIRDIEQLMRDATALDRAGVVALVLEGIPREVAAMITAEVETPTIGIGAGPDCDGQVLVFHDILNLTFAPPAKFVRRYADAAELITGAVKAFRDDVKTGSYPSDDESYHLPKEAQATLEMVQNRKHAMRK.

Mg(2+) contacts are provided by Asp53 and Asp92. 3-methyl-2-oxobutanoate-binding positions include 53-54, Asp92, and Lys122; that span reads DS. Glu124 is a Mg(2+) binding site. Glu191 acts as the Proton acceptor in catalysis.

The protein belongs to the PanB family. Homodecamer; pentamer of dimers. Requires Mg(2+) as cofactor.

It localises to the cytoplasm. The catalysed reaction is 3-methyl-2-oxobutanoate + (6R)-5,10-methylene-5,6,7,8-tetrahydrofolate + H2O = 2-dehydropantoate + (6S)-5,6,7,8-tetrahydrofolate. Its pathway is cofactor biosynthesis; (R)-pantothenate biosynthesis; (R)-pantoate from 3-methyl-2-oxobutanoate: step 1/2. Catalyzes the reversible reaction in which hydroxymethyl group from 5,10-methylenetetrahydrofolate is transferred onto alpha-ketoisovalerate to form ketopantoate. The polypeptide is 3-methyl-2-oxobutanoate hydroxymethyltransferase (Koribacter versatilis (strain Ellin345)).